Reading from the N-terminus, the 637-residue chain is Probable polypeptide N-acetylgalactosaminyltransferase 8 (637 aa).

The Cytoplasmic portion of the chain corresponds to 1–6; sequence MMFWRK. A helical; Signal-anchor for type II membrane protein membrane pass occupies residues 7 to 29; the sequence is LPKALFIGLTLAIAVNLLLVFSS. Residues 30–637 lie on the Lumenal side of the membrane; sequence KGTLQNLFTG…VRDWGQTNSQ (608 aa). Residues N85, N107, and N160 are each glycosylated (N-linked (GlcNAc...) asparagine). Cystine bridges form between C171-C404, C395-C474, C509-C525, C556-C571, and C599-C617. Residues 180–294 form a catalytic subdomain A region; sequence LPSLSVILIF…VGWAEPILAR (115 aa). Residues D221 and R255 each coordinate substrate. Positions 278, 280, and 409 each coordinate Mn(2+). Residues 351 to 412 are catalytic subdomain B; the sequence is PVKSPSIMGI…PCSRIAHLER (62 aa). R412 and Y417 together coordinate substrate. Residues 496 to 634 form the Ricin B-type lectin domain; that stretch reads GYGRMKNLLD…QHTVRDWGQT (139 aa).

The protein belongs to the glycosyltransferase 2 family. GalNAc-T subfamily. It depends on Mn(2+) as a cofactor. As to expression, widely expressed. Expressed in heart, skeletal muscle, kidney, liver, small intestine and placenta. Weakly expressed in colon, thymus, spleen, lung and leukocyte.

Its subcellular location is the golgi apparatus membrane. It catalyses the reaction L-seryl-[protein] + UDP-N-acetyl-alpha-D-galactosamine = a 3-O-[N-acetyl-alpha-D-galactosaminyl]-L-seryl-[protein] + UDP + H(+). The enzyme catalyses L-threonyl-[protein] + UDP-N-acetyl-alpha-D-galactosamine = a 3-O-[N-acetyl-alpha-D-galactosaminyl]-L-threonyl-[protein] + UDP + H(+). The protein operates within protein modification; protein glycosylation. Probably catalyzes the initial reaction in O-linked oligosaccharide biosynthesis, the transfer of an N-acetyl-D-galactosamine residue to a serine or threonine residue on the protein receptor. This chain is Probable polypeptide N-acetylgalactosaminyltransferase 8 (GALNT8), found in Homo sapiens (Human).